The chain runs to 226 residues: DNA mismatch repair protein MutH (226 aa).

The protein belongs to the MutH family.

The protein resides in the cytoplasm. Functionally, sequence-specific endonuclease that cleaves unmethylated GATC sequences. It is involved in DNA mismatch repair. This is DNA mismatch repair protein MutH from Haemophilus ducreyi (strain 35000HP / ATCC 700724).